We begin with the raw amino-acid sequence, 128 residues long: Probable 4-amino-4-deoxy-L-arabinose-phosphoundecaprenol flippase subunit ArnF (128 aa).

Over 1–2 (MG) the chain is Cytoplasmic. A helical transmembrane segment spans residues 3 to 23 (LMWGLFSVIIASAAQLSLGFA). At 24–35 (ASHLPPMTHLWD) the chain is on the periplasmic side. A helical transmembrane segment spans residues 36–56 (FIAALLAFGLDARILLLGLLG). The Cytoplasmic segment spans residues 57-76 (YLLSVFCWYKTLHKLALSKA). The helical transmembrane segment at 77–97 (YALLSMSYVLVWIASMVLPGW) threads the bilayer. Over 98-100 (EGT) the chain is Periplasmic. A helical transmembrane segment spans residues 101-121 (FSLKALLGVACIMSGLMLIFL). The Cytoplasmic portion of the chain corresponds to 122 to 128 (PTTKQRY).

Belongs to the ArnF family. In terms of assembly, heterodimer of ArnE and ArnF.

Its subcellular location is the cell inner membrane. It participates in bacterial outer membrane biogenesis; lipopolysaccharide biosynthesis. Functionally, translocates 4-amino-4-deoxy-L-arabinose-phosphoundecaprenol (alpha-L-Ara4N-phosphoundecaprenol) from the cytoplasmic to the periplasmic side of the inner membrane. The polypeptide is Probable 4-amino-4-deoxy-L-arabinose-phosphoundecaprenol flippase subunit ArnF (Escherichia coli O127:H6 (strain E2348/69 / EPEC)).